Reading from the N-terminus, the 1101-residue chain is Furin-like protease 1, isoform 1-CRR (1101 aa).

The interval 1 to 57 (MKNDVVRWSRQPTSNTTNSSSSSRSDSNSTHKHRSKSNKLNARQLGSNAARSCQQRS) is disordered. The segment covering 13–28 (TSNTTNSSSSSRSDSN) has biased composition (low complexity). Residues N15, N18, and N28 are each glycosylated (N-linked (GlcNAc...) asparagine). The span at 38-57 (NKLNARQLGSNAARSCQQRS) shows a compositional bias: polar residues. N-linked (GlcNAc...) asparagine glycosylation occurs at N108. A helical transmembrane segment spans residues 119–139 (VFLLALQFSAVVFLCNINVGF). The segment covering 150-163 (SAGGSSPAAPSSAP) has biased composition (low complexity). A disordered region spans residues 150–187 (SAGGSSPAAPSSAPSSPPTVAVPPPPPPSSALKVDPNG). Positions 164–178 (SSPPTVAVPPPPPPS) are enriched in pro residues. N-linked (GlcNAc...) asparagine glycosylation occurs at N333. The region spanning 340–654 (MWYLNRGGGL…YGLMDAAEMV (315 aa)) is the Peptidase S8 domain. Catalysis depends on charge relay system residues D372 and H413. Residue N426 is glycosylated (N-linked (GlcNAc...) asparagine). 2 disulfide bridges follow: C430/C579 and C522/C552. S587 acts as the Charge relay system in catalysis. An N-linked (GlcNAc...) asparagine glycan is attached at N606. The 130-residue stretch at 662-791 (AVPEQQRCEI…DMIFYGTETP (130 aa)) folds into the P/Homo B domain. A disulfide bond links C669 and C695. 2 N-linked (GlcNAc...) asparagine glycosylation sites follow: N727 and N859. The interval 886–915 (EEDEQDDEVTRGPVNPYSSSPMDHSLLMSN) is disordered. Polar residues predominate over residues 901–915 (PYSSSPMDHSLLMSN). A glycan (N-linked (GlcNAc...) asparagine) is linked at N978. The chain crosses the membrane as a helical span at residues 1014-1034 (TVLLLVSVIFTLMGVAVAGGI).

It belongs to the peptidase S8 family. Furin subfamily. Ca(2+) is required as a cofactor. In adults, isoform 1-CRR is expressed in CNS, fat body, and female reproductive tissues, and in embryos, in anal pads, hindgut, developing antennomaxillary complex, oenocytes, clipeolabrum, pharynx, trachea, CNS and developing posterior spiracles.

It is found in the golgi apparatus membrane. The catalysed reaction is Release of mature proteins from their proproteins by cleavage of -Arg-Xaa-Yaa-Arg-|-Zaa- bonds, where Xaa can be any amino acid and Yaa is Arg or Lys. Releases albumin, complement component C3 and von Willebrand factor from their respective precursors.. Furin is likely to represent the ubiquitous endoprotease activity within constitutive secretory pathways and capable of cleavage at the RX(K/R)R consensus motif. The chain is Furin-like protease 1, isoform 1-CRR (Fur1) from Drosophila melanogaster (Fruit fly).